A 183-amino-acid chain; its full sequence is MELVVGRVAKSHGIKGEIVVEVRTDEPEDRFAVGAVLRGHKPREQTVNTYRVEAAREHSGRLLLRLEGVPDRTAADALRGTLFVIDSAELVPSDDPDEFYDHELEGLSVRLADGTELGAVIEVLHSAAGELLSIRRAGEQSGELLVPFVAAIVTSVSVADGVVVIDPPEGLLDPDFGESADGK.

The 77-residue stretch at 95 to 171 (DPDEFYDHEL…VVVIDPPEGL (77 aa)) folds into the PRC barrel domain.

The protein belongs to the RimM family. As to quaternary structure, binds ribosomal protein uS19.

Its subcellular location is the cytoplasm. Its function is as follows. An accessory protein needed during the final step in the assembly of 30S ribosomal subunit, possibly for assembly of the head region. Essential for efficient processing of 16S rRNA. May be needed both before and after RbfA during the maturation of 16S rRNA. It has affinity for free ribosomal 30S subunits but not for 70S ribosomes. This Rhodococcus opacus (strain B4) protein is Ribosome maturation factor RimM.